The primary structure comprises 329 residues: RNA-binding protein CP33, chloroplastic (329 aa).

Residues 1–69 constitute a chloroplast transit peptide; that stretch reads MSSAYCSSAV…NIRRHRFFCA (69 aa). Residues 77-104 are compositionally biased toward acidic residues; it reads ADDEIQASVEEEEEVEEEGDEGEEEVEE. 2 disordered regions span residues 77-117 and 296-329; these read ADDE…EEGR and SERE…NVSA. 2 consecutive RRM domains span residues 116 to 194 and 219 to 297; these read GRLY…FPEV and HKVY…LASE.

It is found in the plastid. The protein resides in the chloroplast. Its function is as follows. Could be involved in splicing and/or processing of chloroplast RNAs. The chain is RNA-binding protein CP33, chloroplastic from Arabidopsis thaliana (Mouse-ear cress).